Consider the following 155-residue polypeptide: UPF0178 protein ACICU_02858 (155 aa).

The disordered stretch occupies residues 120–155 (GAGVQTGGPPPISERDKREFSSALDQTILKQKRKTA).

Belongs to the UPF0178 family.

In Acinetobacter baumannii (strain ACICU), this protein is UPF0178 protein ACICU_02858.